A 143-amino-acid polypeptide reads, in one-letter code: Nucleoside diphosphate kinase (143 aa).

Positions 11, 59, 87, 93, 104, and 114 each coordinate ATP. Residue His-117 is the Pros-phosphohistidine intermediate of the active site.

It belongs to the NDK family. As to quaternary structure, homotetramer. The cofactor is Mg(2+).

The protein resides in the cytoplasm. The enzyme catalyses a 2'-deoxyribonucleoside 5'-diphosphate + ATP = a 2'-deoxyribonucleoside 5'-triphosphate + ADP. The catalysed reaction is a ribonucleoside 5'-diphosphate + ATP = a ribonucleoside 5'-triphosphate + ADP. Major role in the synthesis of nucleoside triphosphates other than ATP. The ATP gamma phosphate is transferred to the NDP beta phosphate via a ping-pong mechanism, using a phosphorylated active-site intermediate. In Colwellia psychrerythraea (strain 34H / ATCC BAA-681) (Vibrio psychroerythus), this protein is Nucleoside diphosphate kinase.